We begin with the raw amino-acid sequence, 469 residues long: Glutamate--tRNA ligase (469 aa).

Residues 9–19 (PSPTGFLHVGG) carry the 'HIGH' region motif. Residues C98, C100, C125, and D127 each coordinate Zn(2+). The 'KMSKS' region motif lies at 236-240 (KLSKR). K239 serves as a coordination point for ATP.

Belongs to the class-I aminoacyl-tRNA synthetase family. Glutamate--tRNA ligase type 1 subfamily. As to quaternary structure, monomer. It depends on Zn(2+) as a cofactor.

It is found in the cytoplasm. It carries out the reaction tRNA(Glu) + L-glutamate + ATP = L-glutamyl-tRNA(Glu) + AMP + diphosphate. Its function is as follows. Catalyzes the attachment of glutamate to tRNA(Glu) in a two-step reaction: glutamate is first activated by ATP to form Glu-AMP and then transferred to the acceptor end of tRNA(Glu). The protein is Glutamate--tRNA ligase of Shewanella baltica (strain OS185).